The following is a 400-amino-acid chain: Serine/threonine transporter SstT (400 aa).

A run of 9 helical transmembrane segments spans residues 14–34, 48–68, 76–96, 136–156, 177–197, 211–231, 285–305, 311–331, and 349–371; these read IIIA…VTPY, SVAP…FQVG, VLLL…IASL, AISE…GLAM, IIHK…AVTF, LLAV…PILV, IPLG…VLTL, LGIH…TISA, and CSLF…IISV.

This sequence belongs to the dicarboxylate/amino acid:cation symporter (DAACS) (TC 2.A.23) family.

It localises to the cell inner membrane. It carries out the reaction L-serine(in) + Na(+)(in) = L-serine(out) + Na(+)(out). The enzyme catalyses L-threonine(in) + Na(+)(in) = L-threonine(out) + Na(+)(out). Functionally, involved in the import of serine and threonine into the cell, with the concomitant import of sodium (symport system). This Acinetobacter baumannii (strain ATCC 17978 / DSM 105126 / CIP 53.77 / LMG 1025 / NCDC KC755 / 5377) protein is Serine/threonine transporter SstT.